A 275-amino-acid chain; its full sequence is Undecaprenyl-diphosphatase (275 aa).

The next 7 helical transmembrane spans lie at 1-21 (MTTF…FLPV), 41-61 (ILFL…FVYA), 95-115 (LLII…KDLF), 118-138 (FYNS…LLWT), 192-212 (ATKF…VFEV), 223-243 (FTLT…VFAI), and 255-275 (LYYF…FSLL).

It belongs to the UppP family.

The protein resides in the cell membrane. It carries out the reaction di-trans,octa-cis-undecaprenyl diphosphate + H2O = di-trans,octa-cis-undecaprenyl phosphate + phosphate + H(+). Catalyzes the dephosphorylation of undecaprenyl diphosphate (UPP). Confers resistance to bacitracin. This Alkaliphilus metalliredigens (strain QYMF) protein is Undecaprenyl-diphosphatase.